A 98-amino-acid polypeptide reads, in one-letter code: Integration host factor subunit beta (98 aa).

This sequence belongs to the bacterial histone-like protein family. Heterodimer of an alpha and a beta chain.

This protein is one of the two subunits of integration host factor, a specific DNA-binding protein that functions in genetic recombination as well as in transcriptional and translational control. This is Integration host factor subunit beta from Pseudomonas syringae pv. tomato (strain ATCC BAA-871 / DC3000).